The chain runs to 1692 residues: Flagellar attachment zone protein 1 (1692 aa).

3 coiled-coil regions span residues 613 to 657, 684 to 864, and 903 to 1607; these read REQE…KLQK, VTLD…HKVR, and NDHM…SALE. 37 consecutive repeat copies span residues 1012–1025, 1026–1039, 1040–1053, 1054–1067, 1068–1081, 1082–1095, 1096–1109, 1110–1123, 1124–1137, 1138–1151, 1152–1165, 1166–1179, 1180–1193, 1194–1207, 1208–1221, 1222–1235, 1236–1249, 1250–1263, 1264–1277, 1278–1291, 1292–1305, 1306–1319, 1320–1333, 1334–1347, 1348–1361, 1362–1375, 1376–1389, 1390–1403, 1404–1417, 1418–1431, 1432–1445, 1446–1459, 1460–1473, 1474–1487, 1488–1501, 1502–1515, and 1516–1529. The tract at residues 1012–1529 is 37 X 14 AA tandem repeats of E-E-L-E-L-K-[VA]-A-E-N-E-K-L-A; it reads EELELKAAEN…LKVAENKRLA (518 aa).

The protein resides in the cell projection. Its subcellular location is the cilium. It localises to the flagellum. In terms of biological role, a component of FAZ filament that is required for correct FAZ assembly and attachment. Not essential for new flagellum growth. The protein is Flagellar attachment zone protein 1 of Trypanosoma brucei brucei (strain 927/4 GUTat10.1).